We begin with the raw amino-acid sequence, 539 residues long: Phosphoenolpyruvate carboxykinase (ATP) (539 aa).

The substrate site is built by Arg-64, Tyr-206, and Lys-212. Residues Lys-212, His-231, and 247–255 (GLSGTGKTT) contribute to the ATP site. Lys-212 and His-231 together coordinate Mn(2+). Asp-268 serves as a coordination point for Mn(2+). Residues Glu-296, Arg-332, 448–449 (RI), and Thr-454 contribute to the ATP site. Arg-332 is a substrate binding site.

Belongs to the phosphoenolpyruvate carboxykinase (ATP) family. In terms of assembly, monomer. Requires Mn(2+) as cofactor.

The protein resides in the cytoplasm. It catalyses the reaction oxaloacetate + ATP = phosphoenolpyruvate + ADP + CO2. It participates in carbohydrate biosynthesis; gluconeogenesis. In terms of biological role, involved in the gluconeogenesis. Catalyzes the conversion of oxaloacetate (OAA) to phosphoenolpyruvate (PEP) through direct phosphoryl transfer between the nucleoside triphosphate and OAA. The chain is Phosphoenolpyruvate carboxykinase (ATP) from Hamiltonella defensa subsp. Acyrthosiphon pisum (strain 5AT).